Consider the following 1410-residue polypeptide: Non-secreted LysM effector LysM15 (1410 aa).

LysM domains are found at residues 1179–1225 (TTYT…DICM) and 1231–1277 (TQYT…EILG). Low complexity predominate over residues 1291-1303 (TTGDGITTTPGNG). Positions 1291–1317 (TTGDGITTTPGNGEYAQGVVSPPENST) are disordered. Residues 1328–1375 (RWYSATADDLCVQICLKSGVSAKLFKAANPSLAADCDNSLIAGDAYCV) form the LysM 3 domain.

Belongs to the secreted LysM effector family.

In terms of biological role, non-secreted LysM effector that might be involved in manipulation of host defenses for successful infection. The protein is Non-secreted LysM effector LysM15 of Penicillium expansum (Blue mold rot fungus).